Consider the following 508-residue polypeptide: Aspartyl/glutamyl-tRNA(Asn/Gln) amidotransferase subunit B (508 aa).

Belongs to the GatB/GatE family. GatB subfamily. Heterotrimer of A, B and C subunits.

It catalyses the reaction L-glutamyl-tRNA(Gln) + L-glutamine + ATP + H2O = L-glutaminyl-tRNA(Gln) + L-glutamate + ADP + phosphate + H(+). It carries out the reaction L-aspartyl-tRNA(Asn) + L-glutamine + ATP + H2O = L-asparaginyl-tRNA(Asn) + L-glutamate + ADP + phosphate + 2 H(+). Allows the formation of correctly charged Asn-tRNA(Asn) or Gln-tRNA(Gln) through the transamidation of misacylated Asp-tRNA(Asn) or Glu-tRNA(Gln) in organisms which lack either or both of asparaginyl-tRNA or glutaminyl-tRNA synthetases. The reaction takes place in the presence of glutamine and ATP through an activated phospho-Asp-tRNA(Asn) or phospho-Glu-tRNA(Gln). This chain is Aspartyl/glutamyl-tRNA(Asn/Gln) amidotransferase subunit B, found in Salinibacter ruber (strain DSM 13855 / M31).